Reading from the N-terminus, the 42-residue chain is Large ribosomal subunit protein bL36 (42 aa).

The protein belongs to the bacterial ribosomal protein bL36 family.

The chain is Large ribosomal subunit protein bL36 from Ehrlichia canis (strain Jake).